Consider the following 291-residue polypeptide: Endo-1,4-beta-xylanase 11B (291 aa).

Residues 1-19 (MVAFSSLFLGASIAATALA) form the signal peptide. The 189-residue stretch at 34–222 (TYTQSATGTH…SSGSARINVG (189 aa)) folds into the GH11 domain. Residue N93 is glycosylated (N-linked (GlcNAc...) asparagine). E118 functions as the Nucleophile in the catalytic mechanism. Catalysis depends on E209, which acts as the Proton donor. The tract at residues 223 to 246 (GGSTGGGNNGGGNNGGNPGGNPGG) is disordered. In terms of domain architecture, CBM1 spans 255-291 (NCSPRWGQCGGQGWNGPTCCESGTTCRQQNQWYSQCL).

It belongs to the glycosyl hydrolase 11 (cellulase G) family.

The protein resides in the secreted. The catalysed reaction is Endohydrolysis of (1-&gt;4)-beta-D-xylosidic linkages in xylans.. It functions in the pathway glycan degradation; xylan degradation. With respect to regulation, the activity iss completely inhibited by Hg(2+), a metal ion that interacts with Trp and oxidizes the indole ring, and is significantly enhanced by beta-mercaptoethanol, which counteracts the oxidation effects of the S-S linkage between Cys residues. Its function is as follows. Endo-1,4-beta-xylanase involved in the hydrolysis of xylan, a major structural heterogeneous polysaccharide found in plant biomass representing the second most abundant polysaccharide in the biosphere, after cellulose. Shows maximum activity on soluble wheat arabinoxylan (defined as 100%), moderate activity on birchwood xylan (80.5%) and beechwood xylan (76.2%), and weak activity on insoluble wheat arabinoxylan (7.0%). Has no activity towards glucan or carboxymethyl cellulose-sodium (CMC-Na). This Humicola insolens (Soft-rot fungus) protein is Endo-1,4-beta-xylanase 11B.